The following is a 369-amino-acid chain: MHIEKLELTNYRNYDQLEIAFDDQINVIIGENAQGKTNLMEAIYVLSFARSHRTPREKELIQWDKDYAKIEGRITKRNQSIPLQISITSKGKKAKVNHLEQHRLSDYIGSVNVVMFAPEDLTIVKGAPQIRRRFMDMELGQIQPTYIYHLAQYQKVLKQRNHLLKQLQRKPNSDTTMLEVLTDQLIEHASILLERRFIYLELLRKWAQPIHRGISRELEQLEIQYSPSIEVSEDANKEKIGNIYQMKFAEVKQKEIERGTTLAGPHRDDLIFFVNGKDVQTYGSQGQQRTTALSIKLAEIELIYQEVGEYPILLLDDVLSELDDYRQSHLLNTIQGKVQTFVSTTSVEGIHHETLQQAELFRVTDGVVN.

30–37 contacts ATP; it reads GENAQGKT.

The protein belongs to the RecF family.

The protein localises to the cytoplasm. In terms of biological role, the RecF protein is involved in DNA metabolism; it is required for DNA replication and normal SOS inducibility. RecF binds preferentially to single-stranded, linear DNA. It also seems to bind ATP. The protein is DNA replication and repair protein RecF of Oceanobacillus iheyensis (strain DSM 14371 / CIP 107618 / JCM 11309 / KCTC 3954 / HTE831).